A 584-amino-acid polypeptide reads, in one-letter code: NADPH-dependent diflavin oxidoreductase 1 (584 aa).

The region spanning 6–150 (IYILYGSETG…VFAYWCNHLY (145 aa)) is the Flavodoxin-like domain. FMN is bound by residues 12 to 17 (SETGTA), 59 to 62 (STTG), 97 to 106 (CGDTSYTRFN), and Glu-132. Positions 199–436 (RGKIEATLVH…LPGFLNLSYQ (238 aa)) constitute an FAD-binding FR-type domain. Residues Arg-343, 373–376 (RQYS), and 407–410 (GICS) each bind FAD. NADP(+)-binding positions include Thr-448, 503–504 (SR), and 509–513 (KKYVQ). Position 584 (Trp-584) interacts with FAD.

This sequence belongs to the NADPH-dependent diflavin oxidoreductase NDOR1 family. It in the N-terminal section; belongs to the flavodoxin family. The protein in the C-terminal section; belongs to the flavoprotein pyridine nucleotide cytochrome reductase family. Interacts with dre2; as part of the cytosolic iron-sulfur (Fe-S) protein assembly (CIA) machinery. The cofactor is FAD. FMN is required as a cofactor.

It is found in the cytoplasm. The protein localises to the mitochondrion. It catalyses the reaction 2 oxidized [2Fe-2S]-[protein] + NADPH = 2 reduced [2Fe-2S]-[protein] + NADP(+) + H(+). NADPH-dependent reductase which is a central component of the cytosolic iron-sulfur (Fe-S) protein assembly (CIA) machinery. Transfers electrons from NADPH via its FAD and FMN prosthetic groups to the [2Fe-2S] cluster of dre2, another key component of the CIA machinery. In turn, this reduced cluster provides electrons for assembly of cytosolic iron-sulfur cluster proteins. Positively controls H(2)O(2)-induced cell death. The sequence is that of NADPH-dependent diflavin oxidoreductase 1 from Schizosaccharomyces pombe (strain 972 / ATCC 24843) (Fission yeast).